A 1837-amino-acid chain; its full sequence is Zinc finger SWIM domain-containing protein 8 (1837 aa).

3 positions are modified to phosphoserine: S36, S48, and S53. Residues 45-65 (RKQSAGPNSPTGGGGGGGSGG) are disordered. The span at 55–65 (TGGGGGGGSGG) shows a compositional bias: gly residues. Residues 172 to 208 (YNVAVMFDRCRVTSCSCTCGAGAKWCTHVVALCLFRI) form an SWIM-type zinc finger. At S437 the chain carries Phosphoserine. Disordered regions lie at residues 514–727 (SRPG…EEDD), 803–823 (NPPD…KVST), and 1016–1232 (SQTH…VPNQ). 2 stretches are compositionally biased toward basic and acidic residues: residues 523–532 (GLEESRDRPR) and 566–575 (LSAEGGDKAL). The residue at position 567 (S567) is a Phosphoserine. Positions 579 to 602 (GPGGGKAKALGGAGSGSKGSAGGG) are enriched in gly residues. Over residues 1019–1040 (HKPQTLSSFYSSSRPTTASQRS) the composition is skewed to polar residues. The span at 1119–1130 (SRGGYNGRGWGS) shows a compositional bias: gly residues. T1139 bears the Phosphothreonine mark. Over residues 1144–1159 (IDSSAPETTSDSSPTL) the composition is skewed to polar residues. S1153, S1156, and S1160 each carry phosphoserine. Low complexity predominate over residues 1174-1209 (GRGQDSDSISSSSSDSLGSSSSSGSRRASASGGARA). Positions 1210-1226 (KTVEVGRYKGRRPESHA) are enriched in basic and acidic residues. A Phosphoserine modification is found at S1267. Disordered regions lie at residues 1442 to 1464 (SASG…GGPG) and 1635 to 1656 (QPSP…SQPV). A compositionally biased stretch (gly residues) spans 1447–1464 (RAGGEAGRGMPEGRGGPG). At S1836 the chain carries Phosphoserine.

Belongs to the ZSWIM8 family. Component of the SCF-like E3 ubiquitin-protein ligase complex which contains CUL3, RBX1, ELOB, ELOC and ZSWIM8. In terms of assembly, (Microbial infection) Interacts with Zika virus protein NS5; this interaction allows STAT2 binding and subsequent proteasomal degradation.

Its subcellular location is the cytoplasm. The protein resides in the cytosol. It functions in the pathway protein modification; protein ubiquitination. In terms of biological role, substrate recognition component of a SCF-like E3 ubiquitin-protein ligase complex that promotes target-directed microRNA degradation (TDMD), a process that mediates degradation of microRNAs (miRNAs). The SCF-like E3 ubiquitin-protein ligase complex acts by catalyzing ubiquitination and subsequent degradation of AGO proteins (AGO1, AGO2, AGO3 and/or AGO4), thereby exposing miRNAs for degradation. Specifically recognizes and binds AGO proteins when they are engaged with a TDMD target. May also act as a regulator of axon guidance: specifically recognizes misfolded ROBO3 and promotes its ubiquitination and subsequent degradation. Plays an essential role for proper embryonic development of heart and lung. Controls protein quality of DAB1, a key signal molecule for brain development, thus protecting its signaling strength. Mechanistically, recognizes intrinsically disordered regions of DAB1 and eliminates misfolded DAB1 that cannot be properly phosphorylated. Its function is as follows. (Microbial infection) Participates in Zika virus inhibition of IFN signaling by acting as a scaffold protein to connect ZSWIM8/CUL3 ligase complex and STAT2, leading to STAT2 degradation. This chain is Zinc finger SWIM domain-containing protein 8, found in Homo sapiens (Human).